The primary structure comprises 296 residues: Acetylglutamate kinase (296 aa).

Substrate contacts are provided by residues 67 to 68 (GG), Arg89, and Asn194.

It belongs to the acetylglutamate kinase family. ArgB subfamily.

Its subcellular location is the cytoplasm. The enzyme catalyses N-acetyl-L-glutamate + ATP = N-acetyl-L-glutamyl 5-phosphate + ADP. Its pathway is amino-acid biosynthesis; L-arginine biosynthesis; N(2)-acetyl-L-ornithine from L-glutamate: step 2/4. In terms of biological role, catalyzes the ATP-dependent phosphorylation of N-acetyl-L-glutamate. The protein is Acetylglutamate kinase of Brucella abortus (strain S19).